Consider the following 312-residue polypeptide: Formimidoylglutamase (312 aa).

Histidine 128, aspartate 153, histidine 155, aspartate 157, aspartate 240, and aspartate 242 together coordinate Mn(2+).

Belongs to the arginase family. Mn(2+) serves as cofactor.

The catalysed reaction is N-formimidoyl-L-glutamate + H2O = formamide + L-glutamate. Its pathway is amino-acid degradation; L-histidine degradation into L-glutamate; L-glutamate from N-formimidoyl-L-glutamate (hydrolase route): step 1/1. Catalyzes the conversion of N-formimidoyl-L-glutamate to L-glutamate and formamide. In Enterobacter sp. (strain 638), this protein is Formimidoylglutamase.